The following is a 217-amino-acid chain: Ribosomal RNA small subunit methyltransferase G (217 aa).

S-adenosyl-L-methionine contacts are provided by residues Gly-74, Leu-79, 125–126 (IQ), and Arg-143.

The protein belongs to the methyltransferase superfamily. RNA methyltransferase RsmG family.

It localises to the cytoplasm. It catalyses the reaction guanosine(527) in 16S rRNA + S-adenosyl-L-methionine = N(7)-methylguanosine(527) in 16S rRNA + S-adenosyl-L-homocysteine. In terms of biological role, specifically methylates the N7 position of guanine in position 527 of 16S rRNA. The sequence is that of Ribosomal RNA small subunit methyltransferase G from Syntrophotalea carbinolica (strain DSM 2380 / NBRC 103641 / GraBd1) (Pelobacter carbinolicus).